The sequence spans 365 residues: Pectate trisaccharide-lyase (365 aa).

Positions 1–25 are cleaved as a signal peptide; the sequence is MRFSRVVSLVLLLVFTAVLTGAVKA. Residues aspartate 142, aspartate 164, and aspartate 168 each coordinate Ca(2+). Residues 149–171 form a PbH1 1 repeat; sequence SHHIWIDHCTFVNGNDGAVDIKK. Residue arginine 222 is part of the active site. The PbH1 2 repeat unit spans residues 261–287; that stretch reads GAKVHVEGNYFMGYGAVMAEAGIAFLP.

The protein belongs to the polysaccharide lyase 1 family. Homotetramer. Ca(2+) is required as a cofactor.

The protein resides in the secreted. The enzyme catalyses eliminative cleavage of unsaturated trigalacturonate as the major product from the reducing end of polygalacturonic acid/pectate.. Its function is as follows. Cleaves unsaturated trigalacturonate from pectin. Activity is highest towards polygalacturonic acid, activity on methylated pectins decreases with an increasing degree of methylation. The chain is Pectate trisaccharide-lyase from Thermotoga sp. (strain RQ2).